The primary structure comprises 224 residues: Holliday junction branch migration complex subunit RuvA (224 aa).

Residues 1 to 64 (MIGKVAGILD…EDLLQLFGFP (64 aa)) form a domain I region. Residues 65 to 143 (TMIEKEWHRL…ALMAMGGGTA (79 aa)) form a domain II region. The disordered stretch occupies residues 141 to 185 (GTAALAPSEPPEPQPGTSSGSRRKTRAPEPPRPSHTADALSALAN). Positions 144-170 (ALAPSEPPEPQPGTSSGSRRKTRAPEP) are flexible linker. The interval 171 to 224 (PRPSHTADALSALANLGYQPTDAAQAVAQAAGESPDADTAALIRAALKLLAPKS) is domain III.

This sequence belongs to the RuvA family. Homotetramer. Forms an RuvA(8)-RuvB(12)-Holliday junction (HJ) complex. HJ DNA is sandwiched between 2 RuvA tetramers; dsDNA enters through RuvA and exits via RuvB. An RuvB hexamer assembles on each DNA strand where it exits the tetramer. Each RuvB hexamer is contacted by two RuvA subunits (via domain III) on 2 adjacent RuvB subunits; this complex drives branch migration. In the full resolvosome a probable DNA-RuvA(4)-RuvB(12)-RuvC(2) complex forms which resolves the HJ.

It localises to the cytoplasm. Functionally, the RuvA-RuvB-RuvC complex processes Holliday junction (HJ) DNA during genetic recombination and DNA repair, while the RuvA-RuvB complex plays an important role in the rescue of blocked DNA replication forks via replication fork reversal (RFR). RuvA specifically binds to HJ cruciform DNA, conferring on it an open structure. The RuvB hexamer acts as an ATP-dependent pump, pulling dsDNA into and through the RuvAB complex. HJ branch migration allows RuvC to scan DNA until it finds its consensus sequence, where it cleaves and resolves the cruciform DNA. The sequence is that of Holliday junction branch migration complex subunit RuvA from Cereibacter sphaeroides (strain KD131 / KCTC 12085) (Rhodobacter sphaeroides).